We begin with the raw amino-acid sequence, 183 residues long: Probable cobalt-precorrin-6B C(15)-methyltransferase (decarboxylating) (183 aa).

S-adenosyl-L-methionine is bound by residues threonine 19, 43 to 47 (GCGSG), aspartate 64, and alanine 92.

Belongs to the methyltransferase superfamily. Archaeal-type CbiT family.

The catalysed reaction is Co-precorrin-6B + S-adenosyl-L-methionine = Co-precorrin-7 + S-adenosyl-L-homocysteine + CO2. It participates in cofactor biosynthesis; adenosylcobalamin biosynthesis; cob(II)yrinate a,c-diamide from sirohydrochlorin (anaerobic route): step 8/10. In terms of biological role, catalyzes the methylation of C-15 in cobalt-precorrin-6B followed by the decarboxylation of C-12 to form cobalt-precorrin-7. The polypeptide is Probable cobalt-precorrin-6B C(15)-methyltransferase (decarboxylating) (Methanocaldococcus jannaschii (strain ATCC 43067 / DSM 2661 / JAL-1 / JCM 10045 / NBRC 100440) (Methanococcus jannaschii)).